We begin with the raw amino-acid sequence, 302 residues long: Taste receptor type 2 member 104 (302 aa).

The Extracellular segment spans residues 1-7; sequence MLSMLES. The helical transmembrane segment at 8 to 28 threads the bilayer; sequence ILLSVATSEAMLGILGNIFIV. The Cytoplasmic segment spans residues 29–43; that stretch reads LVNCTNWVRNKKLSK. The chain crosses the membrane as a helical span at residues 44–64; that stretch reads INFILTGLAISRVFTIWIITL. The Extracellular segment spans residues 65 to 87; the sequence is DAYTKVFFLTTLMPSNLHECISY. Residues 88-108 form a helical membrane-spanning segment; it reads IWVIINHLSVWFATSLSIFYF. Residues 109-128 are Cytoplasmic-facing; the sequence is LKIANFSHYIFLWLKRRADK. Residues 129 to 149 form a helical membrane-spanning segment; the sequence is VFVFLIGYLIITWLASFPLAV. Over 150–182 the chain is Extracellular; it reads TVIKNIKVHHNNTSWLIQLEKRELLINYVFANM. Asparagine 160 and asparagine 161 each carry an N-linked (GlcNAc...) asparagine glycan. Residues 183–203 form a helical membrane-spanning segment; sequence GPISLFMVAVFTCFLLTISLW. At 204–233 the chain is on the cytoplasmic side; the sequence is RHRRRMQSTGSKFRDLNTEVHVKAMKVLIS. The chain crosses the membrane as a helical span at residues 234-254; sequence FIILFILYFMGVLIETLCLFL. Residues 255–257 lie on the Extracellular side of the membrane; that stretch reads TEN. The helical transmembrane segment at 258–278 threads the bilayer; that stretch reads ILLFIFGFTLSSTYPCCHSFI. Residues 279–302 lie on the Cytoplasmic side of the membrane; sequence LILTSRELKQASMRALQRLKCCET.

The protein belongs to the G-protein coupled receptor T2R family.

Its subcellular location is the membrane. In terms of biological role, putative taste receptor which may play a role in the perception of bitterness. This is Taste receptor type 2 member 104 from Rattus norvegicus (Rat).